The following is a 277-amino-acid chain: Putative phosphoenolpyruvate synthase regulatory protein (277 aa).

157–164 provides a ligand contact to ADP; the sequence is GVSRCGKT.

This sequence belongs to the pyruvate, phosphate/water dikinase regulatory protein family. PSRP subfamily.

It catalyses the reaction [pyruvate, water dikinase] + ADP = [pyruvate, water dikinase]-phosphate + AMP + H(+). The catalysed reaction is [pyruvate, water dikinase]-phosphate + phosphate + H(+) = [pyruvate, water dikinase] + diphosphate. Bifunctional serine/threonine kinase and phosphorylase involved in the regulation of the phosphoenolpyruvate synthase (PEPS) by catalyzing its phosphorylation/dephosphorylation. This Citrobacter koseri (strain ATCC BAA-895 / CDC 4225-83 / SGSC4696) protein is Putative phosphoenolpyruvate synthase regulatory protein.